A 66-amino-acid chain; its full sequence is Beta-mammal toxin Cv3 (66 aa).

One can recognise an LCN-type CS-alpha/beta domain in the interval 1 to 66 (KEGYIVNYYD…VWPLPNKTCN (66 aa)). Disulfide bonds link Cys-12-Cys-65, Cys-16-Cys-41, Cys-25-Cys-46, and Cys-29-Cys-48.

As to expression, expressed by the venom gland.

It localises to the secreted. In terms of biological role, beta toxins bind voltage-independently at site-4 of sodium channels (Nav) and reduces peak current and shifts the voltage of activation toward more negative potentials thereby affecting sodium channel activation and promoting spontaneous and repetitive firing. This toxin is strongly toxic to mice. This Centruroides villegasi (Scorpion) protein is Beta-mammal toxin Cv3.